A 117-amino-acid chain; its full sequence is UPF0102 protein Ssed_4252 (117 aa).

This sequence belongs to the UPF0102 family.

The sequence is that of UPF0102 protein Ssed_4252 from Shewanella sediminis (strain HAW-EB3).